A 250-amino-acid chain; its full sequence is Histone H1.3 (250 aa).

Disordered stretches follow at residues 17 to 53 (AASGEKKVSTKKAAATPKSKKSTAAPPSHPPTQQMVD) and 104 to 250 (QTKG…ATKK). The span at 27–42 (KKAAATPKSKKSTAAP) shows a compositional bias: low complexity. An H15 domain is found at 44 to 118 (SHPPTQQMVD…GASGSFKLSR (75 aa)). Basic and acidic residues predominate over residues 120–133 (AKKDAKPKASAVEK). Residues 138–161 (VNASAAAATKRSSSTSTTKKAAGA) show a composition bias toward low complexity. Residues 174 to 191 (KNVEKKKADKEKAKDAKK) are compositionally biased toward basic and acidic residues. The span at 192–234 (TGTIKAKLTTAKAKSSATKPKTPKPKTTSAKPKKVVSATTPKK) shows a compositional bias: low complexity. Basic residues predominate over residues 235–250 (TAVKKPKAKTASATKK).

Belongs to the histone H1/H5 family.

It localises to the nucleus. The protein localises to the chromosome. In terms of biological role, histones H1 are necessary for the condensation of nucleosome chains into higher-order structures. The protein is Histone H1.3 (His1.3) of Drosophila virilis (Fruit fly).